We begin with the raw amino-acid sequence, 509 residues long: 4-aminobutyrate aminotransferase (509 aa).

Position 166-167 (166-167 (GS)) interacts with pyridoxal 5'-phosphate. A substrate-binding site is contributed by Arg-223. The residue at position 363 (Lys-363) is an N6-(pyridoxal phosphate)lysine. Residue Thr-387 coordinates pyridoxal 5'-phosphate.

It belongs to the class-III pyridoxal-phosphate-dependent aminotransferase family. In terms of assembly, homodimer. It depends on pyridoxal 5'-phosphate as a cofactor.

The protein localises to the cytoplasm. It carries out the reaction 4-aminobutanoate + 2-oxoglutarate = succinate semialdehyde + L-glutamate. In terms of biological role, deaminates gamma-aminobutyric acid (GABA) to succinate-semialdehyde, which in turn is converted to succinate by the succinate semialdehyde dehydrogenase. Not required for the utilization of GABA as nitrogen source. The protein is 4-aminobutyrate aminotransferase (GATA) of Mycosarcoma maydis (Corn smut fungus).